A 391-amino-acid chain; its full sequence is Erythronate-4-phosphate dehydrogenase (391 aa).

Residues Ser45 and Thr67 each coordinate substrate. NAD(+) is bound by residues Asp147 and Thr176. Arg209 is an active-site residue. Asp238 is a binding site for NAD(+). Glu243 is an active-site residue. The active-site Proton donor is His260. Gly263 is a binding site for NAD(+). Tyr264 contacts substrate.

This sequence belongs to the D-isomer specific 2-hydroxyacid dehydrogenase family. PdxB subfamily. In terms of assembly, homodimer.

Its subcellular location is the cytoplasm. The enzyme catalyses 4-phospho-D-erythronate + NAD(+) = (R)-3-hydroxy-2-oxo-4-phosphooxybutanoate + NADH + H(+). It participates in cofactor biosynthesis; pyridoxine 5'-phosphate biosynthesis; pyridoxine 5'-phosphate from D-erythrose 4-phosphate: step 2/5. Functionally, catalyzes the oxidation of erythronate-4-phosphate to 3-hydroxy-2-oxo-4-phosphonooxybutanoate. The protein is Erythronate-4-phosphate dehydrogenase of Photobacterium profundum (strain SS9).